Consider the following 74-residue polypeptide: DNA-directed RNA polymerase subunit omega (74 aa).

Belongs to the RNA polymerase subunit omega family. In terms of assembly, the RNAP catalytic core consists of 2 alpha, 1 beta, 1 beta' and 1 omega subunit. When a sigma factor is associated with the core the holoenzyme is formed, which can initiate transcription.

It carries out the reaction RNA(n) + a ribonucleoside 5'-triphosphate = RNA(n+1) + diphosphate. In terms of biological role, promotes RNA polymerase assembly. Latches the N- and C-terminal regions of the beta' subunit thereby facilitating its interaction with the beta and alpha subunits. The sequence is that of DNA-directed RNA polymerase subunit omega from Campylobacter jejuni subsp. jejuni serotype O:6 (strain 81116 / NCTC 11828).